The primary structure comprises 690 residues: Glutaminase A (690 aa).

Positions 1-20 are cleaved as a signal peptide; sequence MMHFLSFCLSVASLVSYAGA. N-linked (GlcNAc...) asparagine glycans are attached at residues asparagine 80, asparagine 96, asparagine 435, asparagine 508, asparagine 528, asparagine 538, and asparagine 571.

It belongs to the fungal glutaminase gtaA family.

It localises to the secreted. It catalyses the reaction L-glutamine + H2O = L-glutamate + NH4(+). With respect to regulation, activity is inhibited by about 80% in the presence of 18% sodium chloride. Glutaminase catalyzes the hydrolysis of glutamine to glutamic acid and plays a key role in nitrogen metabolism. Catalyzes the hydrolysis not only of L-glutamine but also of D-glutamine. This Aspergillus oryzae (strain ATCC 42149 / RIB 40) (Yellow koji mold) protein is Glutaminase A.